The following is a 360-amino-acid chain: MLVWFAKFLEQYYSGFNVVSYLTFRSVLALLTALLLSLWIGPKMIRRLQIFKFGQEVRNDGPESHFQKRGTPTMGGLMILATITVSTLLWGDLSNPYIWFSLFVLLGYGAIGFVDDYRKIKYKNTDGLIARWKYFWLSLVSLIAIFGMYALGKDTDATRLVVPFFKEIMPQLGLFYVVLAYFVIVGTSNAVNLTDGLDGLAIMPTVFVAGAFAIIAWATGNVEISKYLYIPYIKYTSELVIFCTAIVGAGLGFLWFNTYPAQVFMGDVGSLALGGALGTIAVLVRQEFLLVIMGGVFVMETVSVILQVGSYKLRKKRIFRMAPIHHHYELKGWPEPRVIIRFWIISLMLVLFGLVTLKLR.

A run of 10 helical transmembrane segments spans residues 21-41 (YLTF…LWIG), 73-93 (TMGG…WGDL), 94-114 (SNPY…IGFV), 132-152 (WKYF…YALG), 168-188 (IMPQ…VGTS), 199-219 (GLAI…AWAT), 239-259 (LVIF…FNTY), 263-283 (VFMG…IAVL), 288-308 (FLLV…ILQV), and 338-358 (VIIR…VTLK).

The protein belongs to the glycosyltransferase 4 family. MraY subfamily. The cofactor is Mg(2+).

The protein localises to the cell inner membrane. It carries out the reaction UDP-N-acetyl-alpha-D-muramoyl-L-alanyl-gamma-D-glutamyl-meso-2,6-diaminopimeloyl-D-alanyl-D-alanine + di-trans,octa-cis-undecaprenyl phosphate = di-trans,octa-cis-undecaprenyl diphospho-N-acetyl-alpha-D-muramoyl-L-alanyl-D-glutamyl-meso-2,6-diaminopimeloyl-D-alanyl-D-alanine + UMP. It functions in the pathway cell wall biogenesis; peptidoglycan biosynthesis. Catalyzes the initial step of the lipid cycle reactions in the biosynthesis of the cell wall peptidoglycan: transfers peptidoglycan precursor phospho-MurNAc-pentapeptide from UDP-MurNAc-pentapeptide onto the lipid carrier undecaprenyl phosphate, yielding undecaprenyl-pyrophosphoryl-MurNAc-pentapeptide, known as lipid I. The sequence is that of Phospho-N-acetylmuramoyl-pentapeptide-transferase from Mannheimia succiniciproducens (strain KCTC 0769BP / MBEL55E).